The sequence spans 411 residues: Serine--tRNA ligase (411 aa).

L-serine is bound at residue 226-228 (TSE). 257–259 (RQE) provides a ligand contact to ATP. Residue glutamate 280 participates in L-serine binding. 344–347 (EISS) lines the ATP pocket. Residue serine 379 participates in L-serine binding.

It belongs to the class-II aminoacyl-tRNA synthetase family. Type-1 seryl-tRNA synthetase subfamily. Homodimer. The tRNA molecule binds across the dimer.

It is found in the cytoplasm. It catalyses the reaction tRNA(Ser) + L-serine + ATP = L-seryl-tRNA(Ser) + AMP + diphosphate + H(+). The enzyme catalyses tRNA(Sec) + L-serine + ATP = L-seryl-tRNA(Sec) + AMP + diphosphate + H(+). It functions in the pathway aminoacyl-tRNA biosynthesis; selenocysteinyl-tRNA(Sec) biosynthesis; L-seryl-tRNA(Sec) from L-serine and tRNA(Sec): step 1/1. Its function is as follows. Catalyzes the attachment of serine to tRNA(Ser). Is also able to aminoacylate tRNA(Sec) with serine, to form the misacylated tRNA L-seryl-tRNA(Sec), which will be further converted into selenocysteinyl-tRNA(Sec). This is Serine--tRNA ligase from Campylobacter lari (strain RM2100 / D67 / ATCC BAA-1060).